The sequence spans 489 residues: 2-(3-amino-3-carboxypropyl)histidine synthase subunit 2 (489 aa).

Position 1 is an N-acetylmethionine (methionine 1). Position 7 is a phosphoserine (serine 7). 3 residues coordinate [4Fe-4S] cluster: cysteine 89, cysteine 110, and cysteine 341. Residue threonine 435 is modified to Phosphothreonine. Serine 446 and serine 456 each carry phosphoserine. Threonine 467 carries the post-translational modification Phosphothreonine. Serine 488 carries the post-translational modification Phosphoserine.

It belongs to the DPH1/DPH2 family. DPH2 subfamily. Component of the 2-(3-amino-3-carboxypropyl)histidine synthase complex composed of DPH1, DPH2, DPH3 and a NADH-dependent reductase. Interacts with DPH1. [4Fe-4S] cluster serves as cofactor. As to expression, strongly expressed in skeletal muscle. Moderately expressed in heart, small intestine, liver, pancreas, testis and colon. Weakly expressed in brain, placenta, kidney, spleen, thymus, prostate, ovary and lymphocytes.

It participates in protein modification; peptidyl-diphthamide biosynthesis. In terms of biological role, required for the first step of diphthamide biosynthesis, a post-translational modification of histidine which occurs in elongation factor 2. DPH1 and DPH2 transfer a 3-amino-3-carboxypropyl (ACP) group from S-adenosyl-L-methionine (SAM) to a histidine residue, the reaction is assisted by a reduction system comprising DPH3 and a NADH-dependent reductase. Facilitates the reduction of the catalytic iron-sulfur cluster found in the DPH1 subunit. The protein is 2-(3-amino-3-carboxypropyl)histidine synthase subunit 2 (DPH2) of Homo sapiens (Human).